Here is a 125-residue protein sequence, read N- to C-terminus: Basic leucine zipper transcriptional factor ATF-like (125 aa).

Residues 1–14 are compositionally biased toward low complexity; it reads MPHSSDSSDSSFSR. Residues 1–58 are disordered; the sequence is MPHSSDSSDSSFSRSPPPGKQDSSDDVRKVQRREKNRIAAQKSRQRQTQKADTLHLES. A bZIP domain is found at 26–89; the sequence is DVRKVQRREK…KYFTSVLSSH (64 aa). Residues 28–50 are basic motif; the sequence is RKVQRREKNRIAAQKSRQRQTQK. A Phosphoserine modification is found at S43. T48 is modified (phosphothreonine). The leucine-zipper stretch occupies residues 54-75; the sequence is LHLESEDLEKQNAALRKEIKQL.

Belongs to the bZIP family. In terms of assembly, heterodimer; mainly heterodimerizes with JUNB. The BATF-JUNB heterodimer interacts with IRF4 and IRF8. Interacts (via bZIP domain) with IRF4 and IRF8; the interaction is direct. Also forms heterodimers with JUN and JUND. Interacts with IFI35. In terms of processing, phosphorylated on serine and threonine residues and at least one tyrosine residue. Phosphorylation at Ser-43 inhibit DNA binding activity and transforms it as a negative regulator of AP-1 mediated transcription.

The protein resides in the nucleus. Its subcellular location is the cytoplasm. In terms of biological role, AP-1 family transcription factor that controls the differentiation of lineage-specific cells in the immune system: specifically mediates the differentiation of T-helper 17 cells (Th17), follicular T-helper cells (TfH), CD8(+) dendritic cells and class-switch recombination (CSR) in B-cells. Acts via the formation of a heterodimer with JUNB that recognizes and binds DNA sequence 5'-TGA[CG]TCA-3'. The BATF-JUNB heterodimer also forms a complex with IRF4 (or IRF8) in immune cells, leading to recognition of AICE sequence (5'-TGAnTCA/GAAA-3'), an immune-specific regulatory element, followed by cooperative binding of BATF and IRF4 (or IRF8) and activation of genes. Controls differentiation of T-helper cells producing interleukin-17 (Th17 cells) by binding to Th17-associated gene promoters: regulates expression of the transcription factor RORC itself and RORC target genes such as IL17 (IL17A or IL17B). Also involved in differentiation of follicular T-helper cells (TfH) by directing expression of BCL6 and MAF. In B-cells, involved in class-switch recombination (CSR) by controlling the expression of both AICDA and of germline transcripts of the intervening heavy-chain region and constant heavy-chain region (I(H)-C(H)). Following infection, can participate in CD8(+) dendritic cell differentiation via interaction with IRF4 and IRF8 to mediate cooperative gene activation. Regulates effector CD8(+) T-cell differentiation by regulating expression of SIRT1. Following DNA damage, part of a differentiation checkpoint that limits self-renewal of hematopoietic stem cells (HSCs): up-regulated by STAT3, leading to differentiation of HSCs, thereby restricting self-renewal of HSCs. This chain is Basic leucine zipper transcriptional factor ATF-like (BATF), found in Bos taurus (Bovine).